The sequence spans 390 residues: Flavohemoprotein (390 aa).

Ser2 carries the post-translational modification N-acetylserine. A Globin domain is found at Pro12 to Ala149. Heme b is bound at residue His96. Catalysis depends on charge relay system residues Tyr106 and Glu148. The segment at Trp157 to Cys390 is reductase. In terms of domain architecture, FAD-binding FR-type spans Glu158–Asp263. FAD contacts are provided by residues Tyr196 and Arg214–Ser217. Gly277–Pro282 provides a ligand contact to NADP(+). Phe382–Pro385 is a binding site for FAD.

Belongs to the globin family. Two-domain flavohemoproteins subfamily. It in the C-terminal section; belongs to the flavoprotein pyridine nucleotide cytochrome reductase family. The cofactor is FAD. Heme b serves as cofactor.

It localises to the cytoplasm. It carries out the reaction 2 nitric oxide + NADPH + 2 O2 = 2 nitrate + NADP(+) + H(+). The enzyme catalyses 2 nitric oxide + NADH + 2 O2 = 2 nitrate + NAD(+) + H(+). Its function is as follows. Is involved in NO detoxification in an aerobic process, termed nitric oxide dioxygenase (NOD) reaction that utilizes O(2) and NAD(P)H to convert NO to nitrate, which protects the fungus from various noxious nitrogen compounds. Therefore, plays a central role in the inducible response to nitrosative stress. In terms of biological role, in the presence of oxygen and NADH, it has NADH oxidase activity, which leads to the generation of superoxide and H(2)O(2). Under anaerobic conditions, it also exhibits nitric oxide reductase and FAD reductase activities. However, all these reactions are much lower than NOD activity. This chain is Flavohemoprotein, found in Candida norvegensis (Yeast).